A 357-amino-acid chain; its full sequence is Ribosomal RNA large subunit methyltransferase M (357 aa).

S-adenosyl-L-methionine-binding positions include Ser-190, 223 to 226, Asp-242, Asp-262, and Asp-278; that span reads APGG. Lys-307 serves as the catalytic Proton acceptor.

It belongs to the class I-like SAM-binding methyltransferase superfamily. RNA methyltransferase RlmE family. RlmM subfamily. In terms of assembly, monomer.

Its subcellular location is the cytoplasm. It carries out the reaction cytidine(2498) in 23S rRNA + S-adenosyl-L-methionine = 2'-O-methylcytidine(2498) in 23S rRNA + S-adenosyl-L-homocysteine + H(+). Functionally, catalyzes the 2'-O-methylation at nucleotide C2498 in 23S rRNA. The protein is Ribosomal RNA large subunit methyltransferase M of Chromohalobacter salexigens (strain ATCC BAA-138 / DSM 3043 / CIP 106854 / NCIMB 13768 / 1H11).